Here is a 312-residue protein sequence, read N- to C-terminus: Tetraacyldisaccharide 4'-kinase (312 aa).

ATP is bound at residue 60 to 67 (IAGGSGKT).

This sequence belongs to the LpxK family.

It catalyses the reaction a lipid A disaccharide + ATP = a lipid IVA + ADP + H(+). Its pathway is glycolipid biosynthesis; lipid IV(A) biosynthesis; lipid IV(A) from (3R)-3-hydroxytetradecanoyl-[acyl-carrier-protein] and UDP-N-acetyl-alpha-D-glucosamine: step 6/6. Transfers the gamma-phosphate of ATP to the 4'-position of a tetraacyldisaccharide 1-phosphate intermediate (termed DS-1-P) to form tetraacyldisaccharide 1,4'-bis-phosphate (lipid IVA). This is Tetraacyldisaccharide 4'-kinase from Helicobacter pylori (strain ATCC 700392 / 26695) (Campylobacter pylori).